The following is a 119-amino-acid chain: Ribosome-binding factor A (119 aa).

Belongs to the RbfA family. Monomer. Binds 30S ribosomal subunits, but not 50S ribosomal subunits or 70S ribosomes.

Its subcellular location is the cytoplasm. One of several proteins that assist in the late maturation steps of the functional core of the 30S ribosomal subunit. Associates with free 30S ribosomal subunits (but not with 30S subunits that are part of 70S ribosomes or polysomes). Required for efficient processing of 16S rRNA. May interact with the 5'-terminal helix region of 16S rRNA. In Citrifermentans bemidjiense (strain ATCC BAA-1014 / DSM 16622 / JCM 12645 / Bem) (Geobacter bemidjiensis), this protein is Ribosome-binding factor A.